A 395-amino-acid polypeptide reads, in one-letter code: S-adenosylmethionine synthase (395 aa).

His16 contacts ATP. Asp18 contacts Mg(2+). Residue Glu44 coordinates K(+). L-methionine contacts are provided by Glu57 and Gln100. Positions Gln100–Arg110 are flexible loop. ATP is bound by residues Asp167–Lys169, Arg233–Phe234, Asp242, Arg248–Lys249, Ala265, and Lys269. Asp242 contributes to the L-methionine binding site. Lys273 contacts L-methionine.

This sequence belongs to the AdoMet synthase family. As to quaternary structure, homotetramer; dimer of dimers. The cofactor is Mg(2+). K(+) is required as a cofactor.

The protein localises to the cytoplasm. The enzyme catalyses L-methionine + ATP + H2O = S-adenosyl-L-methionine + phosphate + diphosphate. Its pathway is amino-acid biosynthesis; S-adenosyl-L-methionine biosynthesis; S-adenosyl-L-methionine from L-methionine: step 1/1. Catalyzes the formation of S-adenosylmethionine (AdoMet) from methionine and ATP. The overall synthetic reaction is composed of two sequential steps, AdoMet formation and the subsequent tripolyphosphate hydrolysis which occurs prior to release of AdoMet from the enzyme. This is S-adenosylmethionine synthase from Burkholderia ambifaria (strain MC40-6).